Here is a 316-residue protein sequence, read N- to C-terminus: Transaldolase 2 (316 aa).

K131 (schiff-base intermediate with substrate) is an active-site residue.

It belongs to the transaldolase family. Type 1 subfamily. As to quaternary structure, homodimer.

The protein localises to the cytoplasm. The enzyme catalyses D-sedoheptulose 7-phosphate + D-glyceraldehyde 3-phosphate = D-erythrose 4-phosphate + beta-D-fructose 6-phosphate. It participates in carbohydrate degradation; pentose phosphate pathway; D-glyceraldehyde 3-phosphate and beta-D-fructose 6-phosphate from D-ribose 5-phosphate and D-xylulose 5-phosphate (non-oxidative stage): step 2/3. Its function is as follows. Transaldolase is important for the balance of metabolites in the pentose-phosphate pathway. This Shigella sonnei (strain Ss046) protein is Transaldolase 2.